A 145-amino-acid chain; its full sequence is MGEKWKRQQKLCNVPHIPRIRVPRSASDTPLLKDLTQGQQRYFYSIMRIYSPRPQWEALQARYLHSLQHQQLLGYITQREASACAAVLRDSTKRASAKAGPHRTVPQRAAGRTRTQPSARPVCVIPLRARSTRLPSLRSRAVHKL.

Positions 92-121 (TKRASAKAGPHRTVPQRAAGRTRTQPSARP) are disordered.

Belongs to the FAM216 family.

The polypeptide is Protein FAM216B (FAM216B) (Bos taurus (Bovine)).